A 602-amino-acid chain; its full sequence is Probable translation initiation factor IF-2 (602 aa).

The 216-residue stretch at 15–230 folds into the tr-type G domain; it reads LRTPIVAVLG…VLMGLSQRYL (216 aa). Residues 24–31 form a G1 region; that stretch reads GHVDHGKT. Residue 24 to 31 participates in GTP binding; sequence GHVDHGKT. The tract at residues 49-53 is G2; it reads AITQH. Residues 86–89 form a G3 region; that stretch reads DTPG. GTP contacts are provided by residues 86–90 and 140–143; these read DTPGH and NKID. Residues 140 to 143 form a G4 region; that stretch reads NKID. Positions 208 to 210 are G5; it reads SAE.

The protein belongs to the TRAFAC class translation factor GTPase superfamily. Classic translation factor GTPase family. IF-2 subfamily.

Function in general translation initiation by promoting the binding of the formylmethionine-tRNA to ribosomes. Seems to function along with eIF-2. This Natronomonas pharaonis (strain ATCC 35678 / DSM 2160 / CIP 103997 / JCM 8858 / NBRC 14720 / NCIMB 2260 / Gabara) (Halobacterium pharaonis) protein is Probable translation initiation factor IF-2.